The primary structure comprises 631 residues: MSATKLTRREQRAQAQHFIDTLEGSAFPNSKRIYITGTHPGVRVPMREIQLSPTLIGGSKEQPQYEENEAIPVYDTSGPYGDPQIAINVQQGLAKLRQPWIDARGDTEELTVRSSDYTKARLADDGLDELRFSGVLTPKRAKAGHRVTQLHYARKGIITPEMEFIAIRENMGRERIRSEVLRHQHPGMSFGARLPENITAEFVRDEVAAGRAIIPANINHPESEPMIIGRNFLVKVNANIGNSAVTSSIEEEVEKLVWSTRWGADTVMDLSTGRYIHETREWILRNSPVPIGTVPIYQALEKVNGIAEDLTWEVFRDTLLEQAEQGVDYFTIHAGVLLRYVPMTAKRLTGIVSRGGSIMAKWCLSHHQENFLYQHFREICEICAAYDVSLSLGDGLRPGSIQDANDEAQFAELHTLGELTKIAWEYDVQVMIEGPGHVPMQMIRRNMTEELEHCHEAPFYTLGPLTTDIAPGYDHFTSGIGAAMIGWFGCAMLCYVTPKEHLGLPNKEDVKQGLITYKIAAHAADLAKGHPGAQIRDNAMSKARFEFRWEDQFNLALDPFTARAYHDETLPQESGKVAHFCSMCGPKFCSMKISQEVRDYAAAQTIEVGMADMSENFRARGGEIYLRKEEA.

Substrate-binding positions include asparagine 239, methionine 268, tyrosine 297, histidine 333, serine 353 to glycine 355, aspartate 394 to arginine 397, and glutamate 433. Histidine 437 lines the Zn(2+) pocket. A substrate-binding site is contributed by tyrosine 460. Zn(2+) is bound at residue histidine 501. 3 residues coordinate [4Fe-4S] cluster: cysteine 581, cysteine 584, and cysteine 589.

This sequence belongs to the ThiC family. As to quaternary structure, homodimer. [4Fe-4S] cluster is required as a cofactor.

The catalysed reaction is 5-amino-1-(5-phospho-beta-D-ribosyl)imidazole + S-adenosyl-L-methionine = 4-amino-2-methyl-5-(phosphooxymethyl)pyrimidine + CO + 5'-deoxyadenosine + formate + L-methionine + 3 H(+). It participates in cofactor biosynthesis; thiamine diphosphate biosynthesis. Catalyzes the synthesis of the hydroxymethylpyrimidine phosphate (HMP-P) moiety of thiamine from aminoimidazole ribotide (AIR) in a radical S-adenosyl-L-methionine (SAM)-dependent reaction. This is Phosphomethylpyrimidine synthase from Escherichia coli O6:K15:H31 (strain 536 / UPEC).